The sequence spans 161 residues: Nucleotide-binding protein Sfri_0732 (161 aa).

Belongs to the YajQ family.

Functionally, nucleotide-binding protein. The chain is Nucleotide-binding protein Sfri_0732 from Shewanella frigidimarina (strain NCIMB 400).